Consider the following 240-residue polypeptide: Ribonuclease 3 (240 aa).

The RNase III domain maps to 9–141 (VEEFQKETGI…LLAAIYLDQG (133 aa)). Residue glutamate 54 participates in Mg(2+) binding. Aspartate 58 is an active-site residue. The Mg(2+) site is built by aspartate 127 and glutamate 130. Glutamate 130 is an active-site residue. The DRBM domain maps to 168–237 (DYKTALQEIV…ARIAYEKLLK (70 aa)).

This sequence belongs to the ribonuclease III family. In terms of assembly, homodimer. The cofactor is Mg(2+).

It localises to the cytoplasm. The enzyme catalyses Endonucleolytic cleavage to 5'-phosphomonoester.. Digests double-stranded RNA. Involved in the processing of primary rRNA transcript to yield the immediate precursors to the large and small rRNAs (23S and 16S). Also processes some mRNAs, and tRNAs when they are encoded in the rRNA operon. Probably processes pre-crRNA and tracrRNA of type II CRISPR loci if present in the organism. This Thermotoga maritima (strain ATCC 43589 / DSM 3109 / JCM 10099 / NBRC 100826 / MSB8) protein is Ribonuclease 3 (rnc).